A 220-amino-acid chain; its full sequence is Nucleoside diphosphate kinase, mitochondrial (220 aa).

The N-terminal 57 residues, 1–57, are a transit peptide targeting the mitochondrion; that stretch reads MFSRFARAFPKILASGASQRTFATVQKAFANPTSKKLIVGSSLLIGSAFATTSFVAC. Positions 80, 128, 156, 162, 173, and 183 each coordinate ATP. H186 (pros-phosphohistidine intermediate) is an active-site residue.

The protein belongs to the NDK family. Requires Mg(2+) as cofactor.

The protein localises to the mitochondrion intermembrane space. It catalyses the reaction a 2'-deoxyribonucleoside 5'-diphosphate + ATP = a 2'-deoxyribonucleoside 5'-triphosphate + ADP. It carries out the reaction a ribonucleoside 5'-diphosphate + ATP = a ribonucleoside 5'-triphosphate + ADP. Its function is as follows. Major role in the synthesis of nucleoside triphosphates other than ATP. The ATP gamma phosphate is transferred to the NDP beta phosphate via a ping-pong mechanism, using a phosphorylated active-site intermediate. The polypeptide is Nucleoside diphosphate kinase, mitochondrial (ndkM) (Dictyostelium discoideum (Social amoeba)).